The sequence spans 126 residues: MSNVPADLKYTDEHEWIRTEADGTLTVGITDHAQSTLGDIVFLELPAVGKSVSAGDAVGVVESVKAASDIYSPVSGEIIAINEEAADSPEEVNSDAYGVWLFKIKLADGASTDKLIDADAYGKLID.

The Lipoyl-binding domain occupies 24-105 (TLTVGITDHA…AYGVWLFKIK (82 aa)). Position 65 is an N6-lipoyllysine (Lys65).

This sequence belongs to the GcvH family. The glycine cleavage system is composed of four proteins: P, T, L and H. Requires (R)-lipoate as cofactor.

The glycine cleavage system catalyzes the degradation of glycine. The H protein shuttles the methylamine group of glycine from the P protein to the T protein. This is Glycine cleavage system H protein from Burkholderia ambifaria (strain MC40-6).